The primary structure comprises 731 residues: Catalase-peroxidase (731 aa).

Positions 98-226 form a cross-link, tryptophyl-tyrosyl-methioninium (Trp-Tyr) (with M-252); the sequence is WHAAGTYRTA…LAAVQMGLIY (129 aa). Residue His99 is the Proton acceptor of the active site. Positions 226 to 252 form a cross-link, tryptophyl-tyrosyl-methioninium (Tyr-Met) (with W-98); sequence YVNPEGPDGNPDIVASGHDVIETFGRM. His267 lines the heme b pocket.

It belongs to the peroxidase family. Peroxidase/catalase subfamily. Homodimer or homotetramer. The cofactor is heme b. In terms of processing, formation of the three residue Trp-Tyr-Met cross-link is important for the catalase, but not the peroxidase activity of the enzyme.

It carries out the reaction H2O2 + AH2 = A + 2 H2O. The catalysed reaction is 2 H2O2 = O2 + 2 H2O. Its function is as follows. Bifunctional enzyme with both catalase and broad-spectrum peroxidase activity. This chain is Catalase-peroxidase, found in Ruegeria pomeroyi (strain ATCC 700808 / DSM 15171 / DSS-3) (Silicibacter pomeroyi).